The chain runs to 413 residues: Multifunctional CCA protein (413 aa).

The ATP site is built by Gly-8 and Arg-11. The CTP site is built by Gly-8 and Arg-11. Asp-21 and Asp-23 together coordinate Mg(2+). Positions 91, 143, and 146 each coordinate ATP. CTP contacts are provided by Arg-91, Arg-143, and Arg-146. Residues 232-333 (TGVHVMMVVD…VRFFERTDAL (102 aa)) enclose the HD domain.

It belongs to the tRNA nucleotidyltransferase/poly(A) polymerase family. Bacterial CCA-adding enzyme type 1 subfamily. As to quaternary structure, monomer. Can also form homodimers and oligomers. It depends on Mg(2+) as a cofactor. Requires Ni(2+) as cofactor.

The enzyme catalyses a tRNA precursor + 2 CTP + ATP = a tRNA with a 3' CCA end + 3 diphosphate. It catalyses the reaction a tRNA with a 3' CCA end + 2 CTP + ATP = a tRNA with a 3' CCACCA end + 3 diphosphate. Functionally, catalyzes the addition and repair of the essential 3'-terminal CCA sequence in tRNAs without using a nucleic acid template. Adds these three nucleotides in the order of C, C, and A to the tRNA nucleotide-73, using CTP and ATP as substrates and producing inorganic pyrophosphate. tRNA 3'-terminal CCA addition is required both for tRNA processing and repair. Also involved in tRNA surveillance by mediating tandem CCA addition to generate a CCACCA at the 3' terminus of unstable tRNAs. While stable tRNAs receive only 3'-terminal CCA, unstable tRNAs are marked with CCACCA and rapidly degraded. This chain is Multifunctional CCA protein, found in Burkholderia multivorans (strain ATCC 17616 / 249).